We begin with the raw amino-acid sequence, 334 residues long: Sensor protein BceS (334 aa).

Residues 1–12 lie on the Cytoplasmic side of the membrane; that stretch reads MIKAFLIERRSW. A helical membrane pass occupies residues 13 to 33; the sequence is IAAFLFQQALMLFIAFVDPSI. Position 34 (Ser-34) is a topological domain, extracellular. A helical transmembrane segment spans residues 35–55; it reads FGNVLYMVYLCILFFIIFLWF. The Cytoplasmic segment spans residues 56 to 334; sequence RYRKETAFYK…RNQFEHVISV (279 aa). A Histidine kinase domain is found at 121–326; the sequence is AWIHEVKTPL…VFTLTFPIRN (206 aa). His-124 carries the post-translational modification Phosphohistidine; by autocatalysis.

It is found in the cell membrane. The catalysed reaction is ATP + protein L-histidine = ADP + protein N-phospho-L-histidine.. In terms of biological role, member of the two-component regulatory system BceS/BceR involved in the regulation of bacitracin resistance. Activates BceR in response to extracellular bacitracin. In Bacillus subtilis (strain 168), this protein is Sensor protein BceS (bceS).